The sequence spans 151 residues: Transcriptional regulator MraZ (151 aa).

SpoVT-AbrB domains lie at 5–52 (ANAI…PLSE) and 81–124 (AVDL…DEDA).

This sequence belongs to the MraZ family. As to quaternary structure, forms oligomers.

It is found in the cytoplasm. Its subcellular location is the nucleoid. In Pseudomonas savastanoi pv. phaseolicola (strain 1448A / Race 6) (Pseudomonas syringae pv. phaseolicola (strain 1448A / Race 6)), this protein is Transcriptional regulator MraZ.